The primary structure comprises 293 residues: DNA repair protein RecO (293 aa).

The protein belongs to the RecO family.

Functionally, involved in DNA repair and RecF pathway recombination. This Cyanothece sp. (strain PCC 7425 / ATCC 29141) protein is DNA repair protein RecO.